A 429-amino-acid chain; its full sequence is Enolase (429 aa).

Gln-163 provides a ligand contact to (2R)-2-phosphoglycerate. Catalysis depends on Glu-205, which acts as the Proton donor. Positions 242, 286, and 313 each coordinate Mg(2+). Residues Lys-338, Arg-367, Ser-368, and Lys-389 each coordinate (2R)-2-phosphoglycerate. The active-site Proton acceptor is Lys-338.

It belongs to the enolase family. Requires Mg(2+) as cofactor.

Its subcellular location is the cytoplasm. It localises to the secreted. It is found in the cell surface. The enzyme catalyses (2R)-2-phosphoglycerate = phosphoenolpyruvate + H2O. Its pathway is carbohydrate degradation; glycolysis; pyruvate from D-glyceraldehyde 3-phosphate: step 4/5. In terms of biological role, catalyzes the reversible conversion of 2-phosphoglycerate (2-PG) into phosphoenolpyruvate (PEP). It is essential for the degradation of carbohydrates via glycolysis. The chain is Enolase from Pelobacter propionicus (strain DSM 2379 / NBRC 103807 / OttBd1).